Reading from the N-terminus, the 588-residue chain is Oxidoreductase NdmD (588 aa).

Positions 9-114 (WFPIATTEDL…VREKHGFIWT (106 aa)) constitute a Rieske domain. [2Fe-2S] cluster is bound by residues Cys-50, His-52, Cys-69, and His-72. One can recognise an FAD-binding FR-type domain in the interval 272 to 373 (PTHYICEVVT…TLPRNGFPLV (102 aa)). Positions 503-588 (YEVELKKTGQ…CKSKKIVLDL (86 aa)) constitute a 2Fe-2S ferredoxin-type domain. Positions 537, 542, 545, and 575 each coordinate [2Fe-2S] cluster.

It depends on [2Fe-2S] cluster as a cofactor.

Functionally, involved in the caffeine degradation, which is the essential first step for assimilating the carbon and nitrogen in caffeine. Catalyzes the oxidation of NADH and transfers electrons to NdmA and NdmB, which catalyze the N-demethylation reactions. This Pseudomonas putida (Arthrobacter siderocapsulatus) protein is Oxidoreductase NdmD (ndmD).